Consider the following 428-residue polypeptide: Stromal membrane-associated protein 2 (428 aa).

One can recognise an Arf-GAP domain in the interval 13 to 139 (QAVLGSLLSE…INTFRKEKDD (127 aa)). The C4-type zinc-finger motif lies at 28–51 (CADCQAKGPRWASWNIGVFICIRC). Positions 161-172 (VKMPQKKEETQQ) are enriched in basic and acidic residues. Disordered stretches follow at residues 161 to 182 (VKMP…KSTE) and 222 to 258 (SRKV…AGKK).

In terms of assembly, may interact with clathrin heavy chains.

GTPase activating protein. May play a role in clathrin-dependent retrograde transport from early endosomes to the trans-Golgi network. In Gallus gallus (Chicken), this protein is Stromal membrane-associated protein 2 (SMAP2).